A 159-amino-acid chain; its full sequence is H/ACA ribonucleoprotein complex subunit 2-like protein (159 aa).

A disordered region spans residues 1–28 (MAKTPKKDKTEEKEEHEESGGNKEDRER).

The protein belongs to the eukaryotic ribosomal protein eL8 family. Component of the small nucleolar ribonucleoprotein particle containing H/ACA-type snoRNAs (H/ACA snoRNPs). Component of the telomerase holoenzyme complex.

The protein resides in the nucleus. The protein localises to the nucleolus. Its function is as follows. Required for ribosome biogenesis. Part of a complex which catalyzes pseudouridylation of rRNA. This involves the isomerization of uridine such that the ribose is subsequently attached to C5, instead of the normal N1. Pseudouridine ('psi') residues may serve to stabilize the conformation of rRNAs. This chain is H/ACA ribonucleoprotein complex subunit 2-like protein, found in Branchiostoma belcheri (Amphioxus).